A 317-amino-acid chain; its full sequence is UV DNA damage endonuclease (317 aa).

The protein belongs to the uve1/UvsE family.

Functionally, component in a DNA repair pathway. Removal of UV LIGHT damaged nucleotides. Recognizes pyrimidine dimers and cleave a phosphodiester bond immediately 5' to the lesion. The protein is UV DNA damage endonuclease of Bacillus cereus (strain ATCC 10987 / NRS 248).